The sequence spans 313 residues: Pseudouridine-5'-phosphate glycosidase (313 aa).

E34 functions as the Proton donor in the catalytic mechanism. Substrate contacts are provided by K95 and V115. A Mn(2+)-binding site is contributed by D147. 149–151 (SAD) contributes to the substrate binding site. The active-site Nucleophile is K168.

Belongs to the pseudouridine-5'-phosphate glycosidase family. Homotrimer. The cofactor is Mn(2+).

The enzyme catalyses D-ribose 5-phosphate + uracil = psi-UMP + H2O. Functionally, catalyzes the reversible cleavage of pseudouridine 5'-phosphate (PsiMP) to ribose 5-phosphate and uracil. Functions biologically in the cleavage direction, as part of a pseudouridine degradation pathway. In Deinococcus radiodurans (strain ATCC 13939 / DSM 20539 / JCM 16871 / CCUG 27074 / LMG 4051 / NBRC 15346 / NCIMB 9279 / VKM B-1422 / R1), this protein is Pseudouridine-5'-phosphate glycosidase.